Reading from the N-terminus, the 278-residue chain is Probable endonuclease 4 (278 aa).

9 residues coordinate Zn(2+): histidine 67, histidine 107, glutamate 141, aspartate 173, histidine 176, histidine 210, aspartate 223, histidine 225, and glutamate 255.

It belongs to the AP endonuclease 2 family. It depends on Zn(2+) as a cofactor.

The enzyme catalyses Endonucleolytic cleavage to 5'-phosphooligonucleotide end-products.. Its function is as follows. Endonuclease IV plays a role in DNA repair. It cleaves phosphodiester bonds at apurinic or apyrimidinic (AP) sites, generating a 3'-hydroxyl group and a 5'-terminal sugar phosphate. The polypeptide is Probable endonuclease 4 (Natronomonas pharaonis (strain ATCC 35678 / DSM 2160 / CIP 103997 / JCM 8858 / NBRC 14720 / NCIMB 2260 / Gabara) (Halobacterium pharaonis)).